The primary structure comprises 424 residues: Piriformospora indica-insensitive protein 2 (424 aa).

A signal peptide spans 1-21; the sequence is MLWQTFFSSLLLLSLLFGCNG. LRR repeat units follow at residues 141–166, 167–190, 191–213, 214–237, 238–263, 265–286, 287–311, 312–336, 337–360, and 362–387; these read ASNL…IGNL, TKLK…ICNL, KRLK…CFKG, LKEL…SFGD, LVSL…GFLK, LTLL…IENI, QSLT…NWGK, MSNL…LTNL, KRLR…KLEA, and PCLG…FYEK.

The protein resides in the cell membrane. In terms of biological role, required for growth promotion and enhanced seed production mediated by the endophytic fungus Piriformospora indica. This is Piriformospora indica-insensitive protein 2 (PII-2) from Arabidopsis thaliana (Mouse-ear cress).